The sequence spans 361 residues: Probable mannose-1-phosphate guanylyltransferase 2 (361 aa).

GDP-alpha-D-mannose contacts are provided by L6 and V7. 5 residues coordinate diphosphate: G9, G11, T12, R13, and K23. Residues G85, N109, D111, G146, and N173 each coordinate GDP-alpha-D-mannose.

This sequence belongs to the transferase hexapeptide repeat family.

The catalysed reaction is alpha-D-mannose 1-phosphate + GTP + H(+) = GDP-alpha-D-mannose + diphosphate. The protein operates within nucleotide-sugar biosynthesis; GDP-alpha-D-mannose biosynthesis; GDP-alpha-D-mannose from alpha-D-mannose 1-phosphate (GTP route): step 1/1. Functionally, catalyzes a reaction of the Smirnoff-Wheeler pathway, the major route to ascorbate biosynthesis in plants. The sequence is that of Probable mannose-1-phosphate guanylyltransferase 2 from Oryza sativa subsp. japonica (Rice).